The primary structure comprises 287 residues: Shikimate dehydrogenase (NADP(+)) (287 aa).

Shikimate is bound by residues 21 to 23 and T68; that span reads SKS. K72 serves as the catalytic Proton acceptor. 2 residues coordinate shikimate: N93 and D109. Residues 133–137, 157–162, and M226 contribute to the NADP(+) site; these read GAGGA and NRTQTK. Shikimate is bound at residue Y228. NADP(+) is bound at residue G250.

This sequence belongs to the shikimate dehydrogenase family. As to quaternary structure, homodimer.

It catalyses the reaction shikimate + NADP(+) = 3-dehydroshikimate + NADPH + H(+). Its pathway is metabolic intermediate biosynthesis; chorismate biosynthesis; chorismate from D-erythrose 4-phosphate and phosphoenolpyruvate: step 4/7. Its function is as follows. Involved in the biosynthesis of the chorismate, which leads to the biosynthesis of aromatic amino acids. Catalyzes the reversible NADPH linked reduction of 3-dehydroshikimate (DHSA) to yield shikimate (SA). This Shewanella oneidensis (strain ATCC 700550 / JCM 31522 / CIP 106686 / LMG 19005 / NCIMB 14063 / MR-1) protein is Shikimate dehydrogenase (NADP(+)).